A 256-amino-acid polypeptide reads, in one-letter code: F-actin-capping protein subunit alpha (256 aa).

At serine 31 the chain carries Phosphoserine.

This sequence belongs to the F-actin-capping protein alpha subunit family. As to quaternary structure, component of the F-actin capping complex, composed of a heterodimer of an alpha and a beta subunit.

The protein localises to the cytoplasm. Its subcellular location is the cytoskeleton. It localises to the actin patch. Functionally, F-actin-capping proteins bind in a Ca(2+)-independent manner to the fast growing ends of actin filaments (barbed end) thereby blocking the exchange of subunits at these ends. Unlike other capping proteins (such as gelsolin and severin), these proteins do not sever actin filaments. Competes with formin cdc12 for attachment to the actin filaments barbed ends. Slowly replaces cdc12 on the barbed ends in preparation for filament disassembly during contractile ring constriction. The polypeptide is F-actin-capping protein subunit alpha (acp1) (Schizosaccharomyces pombe (strain 972 / ATCC 24843) (Fission yeast)).